Consider the following 728-residue polypeptide: 1,4-alpha-glucan branching enzyme GlgB (728 aa).

Asp-405 (nucleophile) is an active-site residue. The active-site Proton donor is Glu-458.

This sequence belongs to the glycosyl hydrolase 13 family. GlgB subfamily. Monomer.

The catalysed reaction is Transfers a segment of a (1-&gt;4)-alpha-D-glucan chain to a primary hydroxy group in a similar glucan chain.. It participates in glycan biosynthesis; glycogen biosynthesis. Catalyzes the formation of the alpha-1,6-glucosidic linkages in glycogen by scission of a 1,4-alpha-linked oligosaccharide from growing alpha-1,4-glucan chains and the subsequent attachment of the oligosaccharide to the alpha-1,6 position. The polypeptide is 1,4-alpha-glucan branching enzyme GlgB (Shigella dysenteriae serotype 1 (strain Sd197)).